Here is a 209-residue protein sequence, read N- to C-terminus: Large ribosomal subunit protein uL3 (209 aa).

The interval 118–151 (GFQGAIKRHGQSRGPMSHGSRYHRRPGSMGPVAP) is disordered.

It belongs to the universal ribosomal protein uL3 family. As to quaternary structure, part of the 50S ribosomal subunit. Forms a cluster with proteins L14 and L19.

Functionally, one of the primary rRNA binding proteins, it binds directly near the 3'-end of the 23S rRNA, where it nucleates assembly of the 50S subunit. This Enterococcus faecalis (strain ATCC 700802 / V583) protein is Large ribosomal subunit protein uL3.